The sequence spans 362 residues: Ferrochelatase (362 aa).

Fe cation contacts are provided by H228 and E309.

It belongs to the ferrochelatase family.

The protein resides in the cytoplasm. It carries out the reaction heme b + 2 H(+) = protoporphyrin IX + Fe(2+). It participates in porphyrin-containing compound metabolism; protoheme biosynthesis; protoheme from protoporphyrin-IX: step 1/1. Its function is as follows. Catalyzes the ferrous insertion into protoporphyrin IX. In Bordetella bronchiseptica (strain ATCC BAA-588 / NCTC 13252 / RB50) (Alcaligenes bronchisepticus), this protein is Ferrochelatase.